The chain runs to 205 residues: Large ribosomal subunit protein bL25 (205 aa).

This sequence belongs to the bacterial ribosomal protein bL25 family. CTC subfamily. As to quaternary structure, part of the 50S ribosomal subunit; part of the 5S rRNA/L5/L18/L25 subcomplex. Contacts the 5S rRNA. Binds to the 5S rRNA independently of L5 and L18.

In terms of biological role, this is one of the proteins that binds to the 5S RNA in the ribosome where it forms part of the central protuberance. The polypeptide is Large ribosomal subunit protein bL25 (Bartonella bacilliformis (strain ATCC 35685 / KC583 / Herrer 020/F12,63)).